A 124-amino-acid chain; its full sequence is Small ribosomal subunit protein uS12 (124 aa).

Residues 1–24 (MPTINQLVRRPRKPSVSANKAPAL) form a disordered region. Position 90 is a 3-methylthioaspartic acid (aspartate 90).

It belongs to the universal ribosomal protein uS12 family. In terms of assembly, part of the 30S ribosomal subunit. Contacts proteins S8 and S17. May interact with IF1 in the 30S initiation complex.

With S4 and S5 plays an important role in translational accuracy. In terms of biological role, interacts with and stabilizes bases of the 16S rRNA that are involved in tRNA selection in the A site and with the mRNA backbone. Located at the interface of the 30S and 50S subunits, it traverses the body of the 30S subunit contacting proteins on the other side and probably holding the rRNA structure together. The combined cluster of proteins S8, S12 and S17 appears to hold together the shoulder and platform of the 30S subunit. This chain is Small ribosomal subunit protein uS12, found in Anaplasma phagocytophilum (strain HZ).